Here is a 70-residue protein sequence, read N- to C-terminus: uncharacterized protein (70 aa).

The protein localises to the plastid. This is an uncharacterized protein from Euglena longa (Euglenophycean alga).